Reading from the N-terminus, the 570-residue chain is MKLSNMLVSTLREVPAEAEIPSHKLMLRAGMMRKMASGVYNFMPFGLRVIKKIEDIVREEMDNAGAQEFLASALLPSELWKESGRWDVFGPEMFRLQDRNNREFCLGPTHEEVFTDIARNEINSYKQLPLNLYQIQTKYRDERRPRFGLMRSREFIMKDAYSFDKDYEDLDVSYKKMYEAYHNIFIRCGLECNCVEADSGAMGGAGSAEFMVKSEVGEDEIAFCDSCGYGANIEKAPAISEKFDQEELKELAKIETPNVKTIDQLIKFLEINPAKLVKTLIYKVDDKVVAVAIRGDREANEIKIINALGGAVNFEMADEETIKKATNSEVGFAGPIGIKVDCLLIDEEVTNMYNFIIGANETGYHYKNANYKRDFEGIVGDYRKVIQGDKCPLCGGNIEIARGIEVGHIFKLGTKYSESMGANFLDEKGESRPLVMGCYGIGVSRTMAAAIEQNHDENGIVWPLSIAPYHVIVVPVITKDEEQMKAAEEIYNKLKSMGVEVLLDDRAERPGVKFKDADLIGIPIRVTVGKKIKEGKVEYKLRKEEDLEILNIEQVYDKVREEFEKSSLKL.

It belongs to the class-II aminoacyl-tRNA synthetase family. ProS type 1 subfamily. In terms of assembly, homodimer.

It localises to the cytoplasm. It carries out the reaction tRNA(Pro) + L-proline + ATP = L-prolyl-tRNA(Pro) + AMP + diphosphate. Its function is as follows. Catalyzes the attachment of proline to tRNA(Pro) in a two-step reaction: proline is first activated by ATP to form Pro-AMP and then transferred to the acceptor end of tRNA(Pro). As ProRS can inadvertently accommodate and process non-cognate amino acids such as alanine and cysteine, to avoid such errors it has two additional distinct editing activities against alanine. One activity is designated as 'pretransfer' editing and involves the tRNA(Pro)-independent hydrolysis of activated Ala-AMP. The other activity is designated 'posttransfer' editing and involves deacylation of mischarged Ala-tRNA(Pro). The misacylated Cys-tRNA(Pro) is not edited by ProRS. This is Proline--tRNA ligase from Clostridium tetani (strain Massachusetts / E88).